The chain runs to 116 residues: Large ribosomal subunit protein bL19 (116 aa).

It belongs to the bacterial ribosomal protein bL19 family.

This protein is located at the 30S-50S ribosomal subunit interface and may play a role in the structure and function of the aminoacyl-tRNA binding site. The polypeptide is Large ribosomal subunit protein bL19 (Pasteurella multocida (strain Pm70)).